The primary structure comprises 553 residues: MRAPGRPALRPLPLPPLLLLLLAAPWGRAVPCVSGGLPKPANITFLSINMKNVLQWTPPEGLQGVKVTYTVQYFIYGQKKWLNKSECRNINRTYCDLSAETSDYEHQYYAKVKAIWGTKCSKWAESGRFYPFLETQIGPPEVALTTDEKSISVVLTAPEKWKRNPEDLPVSMQQIYSNLKYNVSVLNTKSNRTWSQCVTNHTLVLTWLEPNTLYCVHVESFVPGPPRRAQPSEKQCARTLKDQSSEFKAKIIFWYVLPVSITVFLFSVMGYSIYRYIHVGKEKHPANLILIYGNEFDKRFFVPAEKIVINFITLNISDDSKISHQDMSLLGKSSDVSSLNDPQPSGNLRPPQEEEEVKHLGYASHLMEIFCDSEENTEGTSLTQQESLSRTIPPDKTVIEYEYDVRTTDICAGPEEQELSLQEEVSTQGTLLESQAALAVLGPQTLQYSYTPQLQDLDPLAQEHTDSEEGPEEEPSTTLVDWDPQTGRLCIPSLSSFDQDSEGCEPSEGDGLGEEGLLSRLYEEPAPDRPPGENETYLMQFMEEWGLYVQMEN.

Residues 1–29 (MRAPGRPALRPLPLPPLLLLLLAAPWGRA) form the signal peptide. At 30–250 (VPCVSGGLPK…KDQSSEFKAK (221 aa)) the chain is on the extracellular side. 2 consecutive Fibronectin type-III domains span residues 37 to 135 (LPKP…FLET) and 136 to 242 (QIGP…TLKD). N-linked (GlcNAc...) asparagine glycans are attached at residues N42, N83, N91, N182, N191, and N200. C87 and C95 are joined by a disulfide. A disulfide bridge connects residues C215 and C236. Residues 251–271 (IIFWYVLPVSITVFLFSVMGY) traverse the membrane as a helical segment. At 272–553 (SIYRYIHVGK…EWGLYVQMEN (282 aa)) the chain is on the cytoplasmic side. Disordered stretches follow at residues 333-353 (SSDV…PPQE) and 462-515 (QEHT…LGEE). Residues 334-346 (SDVSSLNDPQPSG) show a composition bias toward polar residues. Over residues 499–513 (QDSEGCEPSEGDGLG) the composition is skewed to acidic residues.

The protein belongs to the type II cytokine receptor family. As to quaternary structure, heterodimer with IL20RB and heterodimer with IL10RB. In terms of tissue distribution, widely expressed with highest levels in skin and testis and high levels in brain. Highly expressed in psoriatic skin.

It localises to the membrane. Its function is as follows. The IL20RA/IL20RB dimer is a receptor for IL19, IL20 and IL24. The IL20RA/IL10RB dimer is a receptor for IL26. The polypeptide is Interleukin-20 receptor subunit alpha (IL20RA) (Homo sapiens (Human)).